A 395-amino-acid chain; its full sequence is S-adenosylmethionine synthase (395 aa).

Position 16 (His-16) interacts with ATP. Residue Asp-18 coordinates Mg(2+). Glu-44 is a binding site for K(+). Glu-57 and Gln-100 together coordinate L-methionine. A flexible loop region spans residues 100 to 110; it reads QSPDIAQGVDD. ATP contacts are provided by residues 174–176, 241–242, Asp-250, 256–257, Ala-273, and Lys-277; these read DAK, RF, and RK. Asp-250 is a binding site for L-methionine. Lys-281 serves as a coordination point for L-methionine.

This sequence belongs to the AdoMet synthase family. In terms of assembly, homotetramer; dimer of dimers. Mg(2+) is required as a cofactor. K(+) serves as cofactor.

It localises to the cytoplasm. The enzyme catalyses L-methionine + ATP + H2O = S-adenosyl-L-methionine + phosphate + diphosphate. The protein operates within amino-acid biosynthesis; S-adenosyl-L-methionine biosynthesis; S-adenosyl-L-methionine from L-methionine: step 1/1. Its function is as follows. Catalyzes the formation of S-adenosylmethionine (AdoMet) from methionine and ATP. The overall synthetic reaction is composed of two sequential steps, AdoMet formation and the subsequent tripolyphosphate hydrolysis which occurs prior to release of AdoMet from the enzyme. The chain is S-adenosylmethionine synthase from Levilactobacillus brevis (strain ATCC 367 / BCRC 12310 / CIP 105137 / JCM 1170 / LMG 11437 / NCIMB 947 / NCTC 947) (Lactobacillus brevis).